The sequence spans 617 residues: 1-deoxy-D-xylulose-5-phosphate synthase (617 aa).

Residues His-77 and 118 to 120 contribute to the thiamine diphosphate site; that span reads GHS. Asp-149 lines the Mg(2+) pocket. Thiamine diphosphate is bound by residues 150-151, Asn-178, Tyr-286, and Glu-367; that span reads GA. Asn-178 provides a ligand contact to Mg(2+).

The protein belongs to the transketolase family. DXPS subfamily. In terms of assembly, homodimer. Mg(2+) is required as a cofactor. Requires thiamine diphosphate as cofactor.

It catalyses the reaction D-glyceraldehyde 3-phosphate + pyruvate + H(+) = 1-deoxy-D-xylulose 5-phosphate + CO2. It participates in metabolic intermediate biosynthesis; 1-deoxy-D-xylulose 5-phosphate biosynthesis; 1-deoxy-D-xylulose 5-phosphate from D-glyceraldehyde 3-phosphate and pyruvate: step 1/1. Functionally, catalyzes the acyloin condensation reaction between C atoms 2 and 3 of pyruvate and glyceraldehyde 3-phosphate to yield 1-deoxy-D-xylulose-5-phosphate (DXP). The protein is 1-deoxy-D-xylulose-5-phosphate synthase of Actinobacillus pleuropneumoniae serotype 5b (strain L20).